We begin with the raw amino-acid sequence, 308 residues long: Beta-1,3-galactosyltransferase 5 (308 aa).

The Cytoplasmic portion of the chain corresponds to 1-7 (MAHMKTR). A helical; Signal-anchor for type II membrane protein membrane pass occupies residues 8–25 (LVYASILMMGALCLYFSM). The Lumenal portion of the chain corresponds to 26 to 308 (DSFRELPFVF…NSKEQDCPAV (283 aa)). Residues asparagine 128, asparagine 172, and asparagine 229 are each glycosylated (N-linked (GlcNAc...) asparagine).

Belongs to the glycosyltransferase 31 family. In terms of tissue distribution, expressed in brain and kidney.

It localises to the golgi apparatus membrane. The catalysed reaction is a globoside Gb4Cer (d18:1(4E)) + UDP-alpha-D-galactose = a globoside GalGb4Cer (d18:1(4E)) + UDP + H(+). It functions in the pathway protein modification; protein glycosylation. In terms of biological role, catalyzes the transfer of Gal to GlcNAc-based acceptors with a preference for the core3 O-linked glycan GlcNAc(beta1,3)GalNAc structure. Can use glycolipid LC3Cer as an efficient acceptor. Also catalyzes the transfer of Gal to the terminal GalNAc unit of the globoside GB4, thereby synthesizing the glycolipid GB5, also known as the stage-specific embryonic antigen-3 (SSEA-3). The polypeptide is Beta-1,3-galactosyltransferase 5 (Mus musculus (Mouse)).